Consider the following 373-residue polypeptide: MFGSSGFGNKSMFGGSNISTSTTTPAANTTQNDDFLVDGAPEDTIQVIKFSPTPQDKPMLACGSWDGTIRVWMFNDANTFEGKAQQNIPAPILDIAWIEDSSKIFIACADKEARLWDLASNQVAVVGTHDGPVKTCHWINGNNYQCLMTGSFDKTLRFWDMKNLPNQTQMAQIQLPERVYAADVLYPMAVVALANKHIKVYNLENGPTEVKDIESQLKFQIRCISIFKDKSNQNPAGFALGSIEGRVAVQYVDVANPKDNFTFKCHRSAELVNGFQEIYAVNDICFHPQHGTLVTIGSDGRYSMWDKDARTKLKTSEPHPMPLTCCDVHSSGAFLVYALGYDWSRGHEGNTQPGSKIVIHKCIEDMKPRPTKK.

The residue at position 1 (methionine 1) is an N-acetylmethionine. 4 WD repeats span residues 40-82 (APED…TFEG), 87-126 (NIPA…VAVV), 128-169 (THDG…NQTQ), and 276-315 (QEIY…KLKT).

The protein belongs to the WD repeat rae1 family. As to quaternary structure, the nuclear pore complex (NPC) constitutes the exclusive means of nucleocytoplasmic transport. NPCs allow the passive diffusion of ions and small molecules and the active, nuclear transport receptor-mediated bidirectional transport of macromolecules such as proteins, RNAs, ribonucleoparticles (RNPs), and ribosomal subunits across the nuclear envelope. Interacts with rpm-1. As to expression, expressed along the ventral and dorsal nerve cords.

The protein resides in the nucleus. It localises to the nuclear pore complex. Its subcellular location is the cell projection. It is found in the axon. The protein localises to the synapse. Functions as a component of the nuclear pore complex (NPC). NPC components, collectively referred to as nucleoporins (NUPs), can play the role of both NPC structural components and of docking or interaction partners for transiently associated nuclear transport factors. It is specifically important for nuclear mRNA export. Has a role in neuronal development, where it acts downstream of rpm-1 to control axon termination and synapse formation in anterior lateral microtubule (ALM) and posterior lateral microtubule (PLM) mechanosensory neurons. This Caenorhabditis elegans protein is mRNA export factor rae-1.